Consider the following 415-residue polypeptide: Gamma-glutamyl phosphate reductase (415 aa).

It belongs to the gamma-glutamyl phosphate reductase family.

It localises to the cytoplasm. It catalyses the reaction L-glutamate 5-semialdehyde + phosphate + NADP(+) = L-glutamyl 5-phosphate + NADPH + H(+). It participates in amino-acid biosynthesis; L-proline biosynthesis; L-glutamate 5-semialdehyde from L-glutamate: step 2/2. Its function is as follows. Catalyzes the NADPH-dependent reduction of L-glutamate 5-phosphate into L-glutamate 5-semialdehyde and phosphate. The product spontaneously undergoes cyclization to form 1-pyrroline-5-carboxylate. This is Gamma-glutamyl phosphate reductase from Mycobacterium bovis (strain BCG / Pasteur 1173P2).